Reading from the N-terminus, the 521-residue chain is Protein NRT1/ PTR FAMILY 4.2 (521 aa).

The next 12 membrane-spanning stretches (helical) occupy residues 30-50, 65-85, 89-109, 133-153, 172-192, 204-224, 297-317, 338-358, 381-401, 413-433, 451-471, and 498-518; these read IVCV…FNFV, ANMV…GGFI, FVTH…GLIL, AILF…KASL, FFDW…TVVL, FNIS…GLPF, FLGL…VAQL, IPVP…IPLY, IGLG…VEAK, ISVL…MLTL, ISTA…TTLV, and LFYV…IFWA.

Belongs to the major facilitator superfamily. Proton-dependent oligopeptide transporter (POT/PTR) (TC 2.A.17) family. As to expression, expressed in siliques.

The protein resides in the membrane. Functionally, involved in abscisic acid transport. The sequence is that of Protein NRT1/ PTR FAMILY 4.2 (NPF4.2) from Arabidopsis thaliana (Mouse-ear cress).